A 137-amino-acid chain; its full sequence is 5-hydroxytryptamine receptor 4 (137 aa).

A helical transmembrane segment spans residues 12 to 35 (TPLRVAVLLAGCWAIPVLISFLPI). Asparagine 58 is a glycosylation site (N-linked (GlcNAc...) asparagine). A helical transmembrane segment spans residues 67-90 (NKPYAITCSVVAFYIPFLLMVLAY). A disordered region spans residues 112–137 (APAEGRPPSADQHSTHRMRTETKAAK).

Belongs to the G-protein coupled receptor 1 family. As to quaternary structure, interacts (via C-terminus 330-346 AA) with GRK5; this interaction is promoted by 5-HT (serotonin).

The protein resides in the cell membrane. It localises to the endosome membrane. In terms of biological role, G-protein coupled receptor for 5-hydroxytryptamine (serotonin), a biogenic hormone that functions as a neurotransmitter, a hormone and a mitogen. Ligand binding causes a conformation change that triggers signaling via guanine nucleotide-binding proteins (G proteins) and modulates the activity of downstream effectors. HTR4 is coupled to G(s) G alpha proteins and mediates activation of adenylate cyclase activity. This is 5-hydroxytryptamine receptor 4 (HTR4) from Sus scrofa (Pig).